A 537-amino-acid chain; its full sequence is 5,6-dihydroxyindole-2-carboxylic acid oxidase (537 aa).

The N-terminal stretch at 1-24 (MKSYNVLPLAYISLFLMLFYQVWA) is a signal peptide. The Lumenal, melanosome segment spans residues 25-477 (QFPRECANIE…WPGQEFTVSE (453 aa)). 5 disulfides stabilise this stretch: cysteine 30/cysteine 41, cysteine 42/cysteine 65, cysteine 56/cysteine 99, cysteine 101/cysteine 110, and cysteine 113/cysteine 122. N-linked (GlcNAc...) asparagine glycans are attached at residues asparagine 96 and asparagine 104. An N-linked (GlcNAc...) asparagine glycan is attached at asparagine 181. Zn(2+) contacts are provided by histidine 192, histidine 215, and histidine 224. Cystine bridges form between cysteine 258/cysteine 261 and cysteine 290/cysteine 303. Asparagine 304 and asparagine 350 each carry an N-linked (GlcNAc...) asparagine glycan. Zn(2+) contacts are provided by histidine 377 and histidine 381. An N-linked (GlcNAc...) asparagine glycan is attached at asparagine 385. Histidine 404 contributes to the Zn(2+) binding site. A helical membrane pass occupies residues 478-501 (IITIAVVAALLLVAAIFGVASCLI). The Cytoplasmic segment spans residues 502 to 537 (RSRSTKNEANQPLLTDHYQRYAEDYEELPNPNHSMV).

It belongs to the tyrosinase family. As to quaternary structure, monomer. Interacts with ATP7A. Interacts with SLC45A2. The cofactor is Cu(2+). Requires Zn(2+) as cofactor. Post-translationally, glycosylated. As to expression, pigment cells.

It is found in the melanosome membrane. The enzyme catalyses 2 5,6-dihydroxyindole-2-carboxylate + O2 = 2 indole-5,6-quinone-2-carboxylate + 2 H2O. The protein operates within pigment biosynthesis; melanin biosynthesis. Plays a role in melanin biosynthesis. Catalyzes the oxidation of 5,6-dihydroxyindole-2-carboxylic acid (DHICA) into indole-5,6-quinone-2-carboxylic acid. May regulate or influence the type of melanin synthesized. Also to a lower extent, capable of hydroxylating tyrosine and producing melanin. This chain is 5,6-dihydroxyindole-2-carboxylic acid oxidase (Tyrp1), found in Mus musculus (Mouse).